Here is a 314-residue protein sequence, read N- to C-terminus: Homoserine kinase (314 aa).

95 to 105 contributes to the ATP binding site; that stretch reads PHSRGLGSSAS.

The protein belongs to the GHMP kinase family. Homoserine kinase subfamily.

The protein localises to the cytoplasm. The catalysed reaction is L-homoserine + ATP = O-phospho-L-homoserine + ADP + H(+). It participates in amino-acid biosynthesis; L-threonine biosynthesis; L-threonine from L-aspartate: step 4/5. Catalyzes the ATP-dependent phosphorylation of L-homoserine to L-homoserine phosphate. The polypeptide is Homoserine kinase (Rhodococcus opacus (strain B4)).